A 441-amino-acid polypeptide reads, in one-letter code: Probable cyclic di-GMP phosphodiesterase VC_1348 (441 aa).

The region spanning 72 to 187 is the Response regulatory domain; the sequence is TILIVDDSPD…LLKSRVHTHL (116 aa). Position 120 is a 4-aspartylphosphate (Asp120). Residues 214 to 425 form the HD-GYP domain; sequence LDRMQDAVVF…FIDIAQKFAD (212 aa).

The catalysed reaction is 3',3'-c-di-GMP + 2 H2O = 2 GMP + 2 H(+). Its function is as follows. Probable phosphodiesterase (PDE) that catalyzes the hydrolysis of cyclic diguanylate (c-di-GMP). Increases motility and decreases biofilm formation in vivo. This Vibrio cholerae serotype O1 (strain ATCC 39315 / El Tor Inaba N16961) protein is Probable cyclic di-GMP phosphodiesterase VC_1348.